The chain runs to 316 residues: Olfactory receptor 52A5 (316 aa).

At 1-27 (MPTFNGSVFMPSAFILIGIPGLESVQC) the chain is on the extracellular side. N-linked (GlcNAc...) asparagine glycosylation is present at asparagine 5. Residues 28–48 (WIGIPFSAMYLIGVIGNSLIL) form a helical membrane-spanning segment. At 49 to 56 (VIIKYENS) the chain is on the cytoplasmic side. Residues 57-77 (LHIPMYIFLAMLAATDIALNT) form a helical membrane-spanning segment. At 78 to 101 (CILPKMLGIFWFHLPEISFDACLF) the chain is on the extracellular side. The chain crosses the membrane as a helical span at residues 102–122 (QMWLIHSFQAIESGILLAMAL). Residues 123–141 (DRYVAICIPLRHATIFSQQ) are Cytoplasmic-facing. Residues 142–162 (FLTHIGLGVTLRAAILIIPSL) form a helical membrane-spanning segment. The Extracellular segment spans residues 163 to 199 (GLIKCCLKHYRTTVISHSYCEHMAIVKLATEDIRVNK). A helical transmembrane segment spans residues 200-220 (IYGLFVAFAILGFDIIFITLS). Residues 221-240 (YVQIFITVFQLPQKEARFKA) are Cytoplasmic-facing. A helical transmembrane segment spans residues 241–261 (FNTCIAHICVFLQFYLLAFFS). The Extracellular portion of the chain corresponds to 262–276 (FFTHRFGSHIPPYIH). A helical membrane pass occupies residues 277-297 (ILLSNLYLLVPPFLNPIVYGV). The Cytoplasmic portion of the chain corresponds to 298 to 316 (KTKQIRDHIVKVFFFKKVT).

This sequence belongs to the G-protein coupled receptor 1 family.

The protein resides in the cell membrane. Its function is as follows. Odorant receptor. This Homo sapiens (Human) protein is Olfactory receptor 52A5 (OR52A5).